The primary structure comprises 110 residues: Large ribosomal subunit protein uL22 (110 aa).

Belongs to the universal ribosomal protein uL22 family. In terms of assembly, part of the 50S ribosomal subunit.

Its function is as follows. This protein binds specifically to 23S rRNA; its binding is stimulated by other ribosomal proteins, e.g. L4, L17, and L20. It is important during the early stages of 50S assembly. It makes multiple contacts with different domains of the 23S rRNA in the assembled 50S subunit and ribosome. The globular domain of the protein is located near the polypeptide exit tunnel on the outside of the subunit, while an extended beta-hairpin is found that lines the wall of the exit tunnel in the center of the 70S ribosome. The protein is Large ribosomal subunit protein uL22 of Klebsiella pneumoniae (strain 342).